Here is a 341-residue protein sequence, read N- to C-terminus: Ferrochelatase (341 aa).

2 residues coordinate Fe cation: His-210 and Glu-291.

Belongs to the ferrochelatase family.

Its subcellular location is the cytoplasm. It catalyses the reaction heme b + 2 H(+) = protoporphyrin IX + Fe(2+). It functions in the pathway porphyrin-containing compound metabolism; protoheme biosynthesis; protoheme from protoporphyrin-IX: step 1/1. Its function is as follows. Catalyzes the ferrous insertion into protoporphyrin IX. The polypeptide is Ferrochelatase (Alcanivorax borkumensis (strain ATCC 700651 / DSM 11573 / NCIMB 13689 / SK2)).